The primary structure comprises 722 residues: Formin-like protein 16 (722 aa).

Disordered stretches follow at residues 1 to 56, 564 to 606, 635 to 672, and 690 to 722; these read MSPV…PMFD, ATED…PSRP, VGSPSPPPPSMSGGAPPPPPPPPMLVASRTAPPPHLSH, and PLLVREGAPPPTLPSMSGGAPPPPPPLPMLRYQ. The span at 22-55 shows a compositional bias: pro residues; the sequence is PLPPPPPPPMRRSAPSPPPMSGRVPPPPPPPPMF. One can recognise an FH2 domain in the interval 182-571; that stretch reads FRCPVTKRSS…KAATEDVFGG (390 aa). Pro residues-rich tracts occupy residues 593-605, 638-658, and 709-722; these read IRPPPSIPRPPSR, PSPPPPSMSGGAPPPPPPPPM, and APPPPPPLPMLRYQ.

This sequence belongs to the formin-like family. Class-II subfamily.

The polypeptide is Formin-like protein 16 (FH16) (Arabidopsis thaliana (Mouse-ear cress)).